A 109-amino-acid polypeptide reads, in one-letter code: Ubiquitin-related modifier 1 homolog (109 aa).

G109 is modified (1-thioglycine). Residue G109 forms a Glycyl lysine isopeptide (Gly-Lys) (interchain with K-? in acceptor proteins) linkage.

This sequence belongs to the URM1 family. Post-translationally, C-terminal thiocarboxylation occurs in 2 steps, it is first acyl-adenylated (-COAMP) via the hesA/moeB/thiF part of the MOCS3 homolog, then thiocarboxylated (-COSH) via the rhodanese domain of the MOCS3 homolog.

The protein localises to the cytoplasm. It participates in tRNA modification; 5-methoxycarbonylmethyl-2-thiouridine-tRNA biosynthesis. Functionally, acts as a sulfur carrier required for 2-thiolation of mcm(5)S(2)U at tRNA wobble positions of cytosolic tRNA(Lys), tRNA(Glu) and tRNA(Gln). Serves as sulfur donor in tRNA 2-thiolation reaction by being thiocarboxylated (-COSH) at its C-terminus by MOCS3. The sulfur is then transferred to tRNA to form 2-thiolation of mcm(5)S(2)U. Also acts as a ubiquitin-like protein (UBL) that is covalently conjugated via an isopeptide bond to lysine residues of target proteins. The thiocarboxylated form serves as substrate for conjugation and oxidative stress specifically induces the formation of UBL-protein conjugates. In Bombyx mori (Silk moth), this protein is Ubiquitin-related modifier 1 homolog.